The sequence spans 129 residues: Small ribosomal subunit protein uS11 (129 aa).

This sequence belongs to the universal ribosomal protein uS11 family. In terms of assembly, part of the 30S ribosomal subunit. Interacts with proteins S7 and S18. Binds to IF-3.

Functionally, located on the platform of the 30S subunit, it bridges several disparate RNA helices of the 16S rRNA. Forms part of the Shine-Dalgarno cleft in the 70S ribosome. This is Small ribosomal subunit protein uS11 from Erwinia tasmaniensis (strain DSM 17950 / CFBP 7177 / CIP 109463 / NCPPB 4357 / Et1/99).